A 636-amino-acid polypeptide reads, in one-letter code: MAEETRQSKLAAAKRKLKEYWQRNSPGVPAGAKRNRKTNGSIHETATSGGCHSPGDSATGIHGESPTSSATLKDLESPCQELAVVPDSRSVKVSQLKNTIKSLKQQNKQVEHQLEEEKKANNEKQKAERELEVQIQRLNIQKGKLNTDLYHTKRSLRYFEEESKDLAVRLQHSLQRKGELERALSAVTATQKKKAERQFSSRSKARMEWKLEQSMREQALLKAQLTQLKESLKEVQLERDEYAEHLKGERARWQQRMRKMSQEVCSLKKEKKHDKYRVEKLERSLSKLKHQMAEPLPPEPPAVPSEVELQHLRKELERVAGELQAQVEYNQRISLLNEGQKERLREQEERLQEQQERLPEQEERLQQLAEPQNSFKELNNENKSVLQLEQQVKELQEKLGKERLEAASQQKQQLTAQLSLMALPGEGDGGGHLDSEGEEAPRPIPSIPQDLESREAMSGFMDHLEEKADLSELVEKEELGFFQYYRERCHQKVYHPITKPGGSAKDAAPGGGHHQAGPGQGGDEGEAAGAAGDGVAAGGDYKGHSKFLVTAQNPAHEPSPGAPAPQELGAAHKHGDLCEVSLTDSVEPVQGEAREGSPHDNPTAQPIVQDHQEHPGLGSNCCVPFFCWAWLPRRRR.

Disordered regions lie at residues 1–72 and 107–127; these read MAEE…SATL and NKQV…KQKA. Residues 38-50 are compositionally biased toward polar residues; sequence TNGSIHETATSGG. 3 coiled-coil regions span residues 93–148, 211–263, and 306–412; these read VSQL…LNTD, LEQS…MSQE, and EVEL…QQKQ. Positions 109–127 are enriched in basic and acidic residues; sequence QVEHQLEEEKKANNEKQKA. 4 disordered regions span residues 344–364, 422–449, 496–537, and 588–612; these read LREQ…QEER, ALPG…SIPQ, PITK…GVAA, and PVQG…QDHQ. Residues 429–441 are compositionally biased toward basic and acidic residues; it reads GGGHLDSEGEEAP. Gly residues predominate over residues 509–522; sequence PGGGHHQAGPGQGG.

The protein belongs to the GOLGA8 family.

The sequence is that of Golgin subfamily A member 8F from Homo sapiens (Human).